The following is a 352-amino-acid chain: Anthranilate phosphoribosyltransferase (352 aa).

5-phospho-alpha-D-ribose 1-diphosphate is bound by residues Gly83, Gly86–Asp87, Thr91, Asn93–Thr96, Lys111–Ser119, and Ala123. Gly83 is an anthranilate binding site. Ser95 serves as a coordination point for Mg(2+). Arg169 is an anthranilate binding site. Asp228 and Glu229 together coordinate Mg(2+).

The protein belongs to the anthranilate phosphoribosyltransferase family. In terms of assembly, homodimer. Mg(2+) serves as cofactor.

The catalysed reaction is N-(5-phospho-beta-D-ribosyl)anthranilate + diphosphate = 5-phospho-alpha-D-ribose 1-diphosphate + anthranilate. The protein operates within amino-acid biosynthesis; L-tryptophan biosynthesis; L-tryptophan from chorismate: step 2/5. Its function is as follows. Catalyzes the transfer of the phosphoribosyl group of 5-phosphorylribose-1-pyrophosphate (PRPP) to anthranilate to yield N-(5'-phosphoribosyl)-anthranilate (PRA). The protein is Anthranilate phosphoribosyltransferase of Neisseria meningitidis serogroup A / serotype 4A (strain DSM 15465 / Z2491).